The primary structure comprises 74 residues: U4-theraphotoxin-Cg1a (74 aa).

The N-terminal stretch at 1–19 (MNATIFALLLLLNLAMHNA) is a signal peptide. Positions 20 to 39 (AEQSSETDMDDTLLIPEINR) are excised as a propeptide. 3 disulfides stabilise this stretch: Cys42/Cys56, Cys49/Cys61, and Cys55/Cys71.

The protein belongs to the neurotoxin 36 family. 01 subfamily. In terms of tissue distribution, expressed by the venom gland.

It localises to the secreted. Functionally, probable ion channel inhibitor. This Chilobrachys guangxiensis (Chinese earth tiger tarantula) protein is U4-theraphotoxin-Cg1a.